The following is a 102-amino-acid chain: Citrate lyase acyl carrier protein (102 aa).

S14 is modified (O-(phosphoribosyl dephospho-coenzyme A)serine).

This sequence belongs to the CitD family. Oligomer with a subunit composition of (alpha,beta,gamma)6.

The protein resides in the cytoplasm. In terms of biological role, covalent carrier of the coenzyme of citrate lyase. The protein is Citrate lyase acyl carrier protein of Streptococcus pyogenes serotype M18 (strain MGAS8232).